Consider the following 29-residue polypeptide: Cytochrome b6-f complex subunit 8 (29 aa).

Residues 3 to 23 (IISLAWAALMVVFTFSLSLVV) traverse the membrane as a helical segment.

This sequence belongs to the PetN family. In terms of assembly, the 4 large subunits of the cytochrome b6-f complex are cytochrome b6, subunit IV (17 kDa polypeptide, PetD), cytochrome f and the Rieske protein, while the 4 small subunits are PetG, PetL, PetM and PetN. The complex functions as a dimer.

It is found in the plastid. Its subcellular location is the chloroplast thylakoid membrane. In terms of biological role, component of the cytochrome b6-f complex, which mediates electron transfer between photosystem II (PSII) and photosystem I (PSI), cyclic electron flow around PSI, and state transitions. This is Cytochrome b6-f complex subunit 8 from Nicotiana tomentosiformis (Tobacco).